Here is a 552-residue protein sequence, read N- to C-terminus: FERRY endosomal RAB5 effector complex subunit 3 (552 aa).

The segment at 383–403 (LKESLDSGNQNGGNDDKTKNA) is disordered.

As to quaternary structure, component of the FERRY complex composed of five subunits, TBCK, PPP1R21, FERRY3, CRYZL1 and GATD1 with a ratio of 1:2:1:2:4, respectively.

It is found in the cytoplasm. The protein localises to the early endosome. Functionally, component of the FERRY complex (Five-subunit Endosomal Rab5 and RNA/ribosome intermediary). The FERRY complex directly interacts with mRNAs and RAB5A, and functions as a RAB5A effector involved in the localization and the distribution of specific mRNAs most likely by mediating their endosomal transport. The complex recruits mRNAs and ribosomes to early endosomes through direct mRNA-interaction. Plays a role in mast cell degranulation. In Pongo abelii (Sumatran orangutan), this protein is FERRY endosomal RAB5 effector complex subunit 3.